Consider the following 327-residue polypeptide: Putative HTH-type transcriptional regulatory protein MmarC6_0210 (327 aa).

The 56-residue stretch at 128–183 folds into the HTH cro/C1-type domain; it reads LRETREKLKISVGELAEISRVSRKTIYKYEQNEANPSAEVAIKIEEYLDVPLIKGI. Residues 139–158 constitute a DNA-binding region (H-T-H motif); sequence VGELAEISRVSRKTIYKYEQ.

The sequence is that of Putative HTH-type transcriptional regulatory protein MmarC6_0210 from Methanococcus maripaludis (strain C6 / ATCC BAA-1332).